A 497-amino-acid polypeptide reads, in one-letter code: 3-octaprenyl-4-hydroxybenzoate carboxy-lyase (497 aa).

Asn-175 lines the Mn(2+) pocket. Prenylated FMN contacts are provided by residues 178–180 (IYR), 192–194 (RWL), and 197–198 (RG). Position 241 (Glu-241) interacts with Mn(2+). Asp-290 (proton donor) is an active-site residue.

It belongs to the UbiD family. As to quaternary structure, homohexamer. Requires prenylated FMN as cofactor. The cofactor is Mn(2+).

The protein resides in the cell membrane. It catalyses the reaction a 4-hydroxy-3-(all-trans-polyprenyl)benzoate + H(+) = a 2-(all-trans-polyprenyl)phenol + CO2. Its pathway is cofactor biosynthesis; ubiquinone biosynthesis. In terms of biological role, catalyzes the decarboxylation of 3-octaprenyl-4-hydroxy benzoate to 2-octaprenylphenol, an intermediate step in ubiquinone biosynthesis. The polypeptide is 3-octaprenyl-4-hydroxybenzoate carboxy-lyase (Shigella sonnei (strain Ss046)).